The following is a 467-amino-acid chain: Trigger factor (467 aa).

The PPIase FKBP-type domain maps to 162-243 (GDFVSIDLSA…LNSVKERHLP (82 aa)). Acidic residues predominate over residues 426 to 435 (EEGNELDLDE). The segment at 426-467 (EEGNELDLDELFGTQAGEEQGEQAEGTEATDEQSAKADAKAE) is disordered. The span at 436–452 (LFGTQAGEEQGEQAEGT) shows a compositional bias: low complexity. Residues 458–467 (QSAKADAKAE) show a composition bias toward basic and acidic residues.

This sequence belongs to the FKBP-type PPIase family. Tig subfamily.

The protein resides in the cytoplasm. It carries out the reaction [protein]-peptidylproline (omega=180) = [protein]-peptidylproline (omega=0). Involved in protein export. Acts as a chaperone by maintaining the newly synthesized protein in an open conformation. Functions as a peptidyl-prolyl cis-trans isomerase. The polypeptide is Trigger factor (Saccharopolyspora erythraea (strain ATCC 11635 / DSM 40517 / JCM 4748 / NBRC 13426 / NCIMB 8594 / NRRL 2338)).